The chain runs to 178 residues: ATP-dependent protease subunit HslV (178 aa).

The active site involves Thr5. Residues Ser161, Cys164, and Thr167 each coordinate Na(+).

The protein belongs to the peptidase T1B family. HslV subfamily. A double ring-shaped homohexamer of HslV is capped on each side by a ring-shaped HslU homohexamer. The assembly of the HslU/HslV complex is dependent on binding of ATP.

It localises to the cytoplasm. The catalysed reaction is ATP-dependent cleavage of peptide bonds with broad specificity.. Allosterically activated by HslU binding. Its function is as follows. Protease subunit of a proteasome-like degradation complex believed to be a general protein degrading machinery. The sequence is that of ATP-dependent protease subunit HslV from Syntrophomonas wolfei subsp. wolfei (strain DSM 2245B / Goettingen).